The sequence spans 131 residues: Jacalin-related lectin 15 (131 aa).

In terms of domain architecture, Jacalin-type lectin spans 1-126 (MSTPSGSNPL…LTSLGAYFAP (126 aa)).

The protein belongs to the jacalin lectin family. Expressed in the vascular and surrounding tissues in cotyledons. Detected in root apical meristems.

This is Jacalin-related lectin 15 (JAL15) from Arabidopsis thaliana (Mouse-ear cress).